We begin with the raw amino-acid sequence, 161 residues long: SsrA-binding protein (161 aa).

Residues 140–161 (KRESIKERDWKRDKQRLLKDRG) form a disordered region.

This sequence belongs to the SmpB family.

Its subcellular location is the cytoplasm. Required for rescue of stalled ribosomes mediated by trans-translation. Binds to transfer-messenger RNA (tmRNA), required for stable association of tmRNA with ribosomes. tmRNA and SmpB together mimic tRNA shape, replacing the anticodon stem-loop with SmpB. tmRNA is encoded by the ssrA gene; the 2 termini fold to resemble tRNA(Ala) and it encodes a 'tag peptide', a short internal open reading frame. During trans-translation Ala-aminoacylated tmRNA acts like a tRNA, entering the A-site of stalled ribosomes, displacing the stalled mRNA. The ribosome then switches to translate the ORF on the tmRNA; the nascent peptide is terminated with the 'tag peptide' encoded by the tmRNA and targeted for degradation. The ribosome is freed to recommence translation, which seems to be the essential function of trans-translation. This Sphingopyxis alaskensis (strain DSM 13593 / LMG 18877 / RB2256) (Sphingomonas alaskensis) protein is SsrA-binding protein.